We begin with the raw amino-acid sequence, 490 residues long: Cardiolipin synthase A (490 aa).

The next 2 helical transmembrane spans lie at 4–24 (YLFT…IIIV) and 39–59 (AAWL…WFLL). 2 PLD phosphodiesterase domains span residues 220–247 (MDLR…VDPY) and 403–430 (KKGL…DMRS). Catalysis depends on residues H225, K227, D232, H408, K410, and D415.

It belongs to the phospholipase D family. Cardiolipin synthase subfamily. ClsA sub-subfamily.

The protein resides in the cell membrane. It catalyses the reaction 2 a 1,2-diacyl-sn-glycero-3-phospho-(1'-sn-glycerol) = a cardiolipin + glycerol. Catalyzes the reversible phosphatidyl group transfer from one phosphatidylglycerol molecule to another to form cardiolipin (CL) (diphosphatidylglycerol) and glycerol. This chain is Cardiolipin synthase A, found in Buchnera aphidicola subsp. Baizongia pistaciae (strain Bp).